The primary structure comprises 110 residues: UPF0060 membrane protein Pmen_1247 (110 aa).

The next 4 helical transmembrane spans lie at 5 to 25, 31 to 51, 59 to 79, and 84 to 104; these read LWFL…WMWL, AWWI…LTRV, AYAA…ALIE, and MLSD…ILFA.

Belongs to the UPF0060 family.

It is found in the cell inner membrane. This Ectopseudomonas mendocina (strain ymp) (Pseudomonas mendocina) protein is UPF0060 membrane protein Pmen_1247.